We begin with the raw amino-acid sequence, 337 residues long: Visual pigment-like receptor peropsin (337 aa).

Topologically, residues 1-26 (MLSEASDFNSSGSRSEGSVFSRTEHS) are extracellular. Asn-9 carries N-linked (GlcNAc...) asparagine glycosylation. A helical transmembrane segment spans residues 27-49 (VIAAYLIVAGITSILSNVVVLGI). Topologically, residues 50-61 (FIKYKELRTPTN) are cytoplasmic. The chain crosses the membrane as a helical span at residues 62 to 87 (AVIINLAFTDIGVSSIGYPMSAASDL). Residues 88–101 (HGSWKFGHAGCQIY) are Extracellular-facing. Cysteines 98 and 175 form a disulfide. A helical transmembrane segment spans residues 102 to 121 (AGLNIFFGMVSIGLLTVVAM). Residues 122–140 (DRYLTISCPDVGRRMTTNT) lie on the Cytoplasmic side of the membrane. The helical transmembrane segment at 141–164 (YLSMILGAWINGLFWALMPIIGWA) threads the bilayer. Over 165–188 (SYAPDPTGATCTINWRNNDTSFVS) the chain is Extracellular. N-linked (GlcNAc...) asparagine glycosylation occurs at Asn-182. Residues 189–212 (YTMMVIVVNFIVPLTVMFYCYYHV) traverse the membrane as a helical segment. At 213-240 (SRSLRLYAASDCTAHLHRDWADQADVTK) the chain is on the cytoplasmic side. The helical transmembrane segment at 241–264 (MSVIMILMFLLAWSPYSIVCLWAC) threads the bilayer. The Extracellular segment spans residues 265–272 (FGNPKKIP). The chain crosses the membrane as a helical span at residues 273-297 (PSMAIIAPLFAKSSTFYNPCIYVAA). Lys-284 carries the post-translational modification N6-(retinylidene)lysine. Over 298–337 (HKKFRKAMLAMFKCQPHLAVPEPSTLPMDMPQSSLAPVRI) the chain is Cytoplasmic.

Belongs to the G-protein coupled receptor 1 family. Opsin subfamily. Found only in the eye, where it is localized to the retinal pigment epithelium (RPE). In the RPE, it is localized to the microvilli that surround the photoreceptor outer segments.

The protein localises to the membrane. May play a role in rpe physiology either by detecting light directly or by monitoring the concentration of retinoids or other photoreceptor-derived compounds. This chain is Visual pigment-like receptor peropsin (Rrh), found in Mus musculus (Mouse).